Consider the following 304-residue polypeptide: Gamma-gliadin B-I (304 aa).

A signal peptide spans 1-23 (MKTFLVFALIAVVATSAIAQMET). Residues 32–92 (PWQQQPLPPQ…PFSQQQQPVL (61 aa)) are disordered. Residues 41–92 (QQSFSQQPPFSQQQQQPLPQQPSFSQQQPPFSQQQPILSQQPPFSQQQQPVL) show a composition bias toward low complexity.

The protein belongs to the gliadin/glutenin family.

In terms of biological role, gliadin is the major seed storage protein in wheat. This is Gamma-gliadin B-I from Triticum aestivum (Wheat).